Consider the following 647-residue polypeptide: A-type voltage-gated potassium channel KCND1 (647 aa).

The Cytoplasmic portion of the chain corresponds to 1–183; it reads MAAGVATWLP…RAFENPHTST (183 aa). Positions 2 to 20 are interaction with KCNIP1, KCNIP2, and other family members; that stretch reads AAGVATWLPFARAAAVGWL. 3 residues coordinate Zn(2+): His104, Cys131, and Cys132. The interval 144–164 is disordered; sequence AQRLAEDEEAEQTGDGPALPA. A helical transmembrane segment spans residues 184–205; the sequence is AALVFYYVTGFFIAVSVIANVV. Residues 206-230 lie on the Extracellular side of the membrane; the sequence is ETIPCRGPARRPPREQPCGDRFPLA. Residues 231–252 traverse the membrane as a helical segment; the sequence is FFCMDTACVLIFTGEYLLRLFA. The Cytoplasmic segment spans residues 253–263; the sequence is APSRCRFLRSV. Residues 264 to 284 form a helical membrane-spanning segment; it reads MSLIDVVAILPYYIGLLVPKN. The Extracellular portion of the chain corresponds to 285–287; that stretch reads EDV. Residues 288-308 form a helical; Voltage-sensor membrane-spanning segment; the sequence is SGAFVTLRVFRVFRIFKFSRH. Over 309 to 323 the chain is Cytoplasmic; it reads SQGLRILGYTLKSCA. Residues 310-323 are S4-S5 linker; it reads QGLRILGYTLKSCA. Residues 324–345 form a helical membrane-spanning segment; sequence SELGFLLFSLTMAIIIFATVMF. At 346 to 359 the chain is on the extracellular side; sequence YAEKGTSKTNFTSI. The segment at residues 360–371 is an intramembrane region (helical); that stretch reads PAAFWYTIVTMT. The Selectivity filter motif lies at 372–377; the sequence is TLGYGD. An intramembrane segment occupies 372–379; that stretch reads TLGYGDMV. Residues 380–386 are Extracellular-facing; sequence PSTIAGK. A helical membrane pass occupies residues 387 to 415; that stretch reads IFGSICSLSGVLVIALPVPVIVSNFSRIY. At 416 to 647 the chain is on the cytoplasmic side; the sequence is HQNQRADKRR…LPETVKISSL (232 aa). The interval 474 to 489 is required for dendritic targeting; it reads FEQQHHHLLHCLEKTT. Positions 510 to 520 are enriched in low complexity; that stretch reads GRTSRSTSVSS. The interval 510-531 is disordered; the sequence is GRTSRSTSVSSQPVGPSSLLSS. Residues 521–530 show a composition bias toward polar residues; that stretch reads QPVGPSSLLS. Ser555 carries the post-translational modification Phosphoserine. Disordered stretches follow at residues 564-584 and 601-634; these read GLRR…PHDS and IPTP…RLGT.

The protein belongs to the potassium channel family. D (Shal) (TC 1.A.1.2) subfamily. Kv4.1/KCND1 sub-subfamily. Component of heteromultimeric potassium channels. Identified in potassium channel complexes containing KCND1, KCND2, KCND3, KCNIP1, KCNIP2, KCNIP3, KCNIP4, DPP6 and DPP10. Detected in carotid body chemoreceptor cells and in frontal cortex.

The protein resides in the cell membrane. It carries out the reaction K(+)(in) = K(+)(out). Functionally, A-type voltage-gated potassium channel that mediates transmembrane potassium transport in excitable membranes in the brain. Mediates A-type current I(SA) in suprachiasmatic nucleus (SCN) neurons. Exhibits a low-threshold A-type current with a hyperpolarized steady-state inactivation midpoint and the recovery process was steeply voltage-dependent, with recovery being markedly faster at more negative potentials. May regulates repetitive firing rates in the suprachiasmatic nucleus (SCN) neurons and circadian rhythms in neuronal excitability and behavior. Contributes to the regulation of the circadian rhythm of action potential firing in suprachiasmatic nucleus neurons, which regulates the circadian rhythm of locomotor activity. The regulatory subunit KCNIP1 modulates the kinetics of channel inactivation, increases the current amplitudes and accelerates recovery from inactivation, shifts activation in a depolarizing direction. The regulatory subunit DPP10 decreases the voltage sensitivity of the inactivation channel gating. This is A-type voltage-gated potassium channel KCND1 from Oryctolagus cuniculus (Rabbit).